The primary structure comprises 84 residues: Dolichol phosphate-mannose biosynthesis regulatory protein (84 aa).

The next 2 membrane-spanning stretches (helical) occupy residues Leu-11–Leu-31 and Tyr-49–Ile-69.

It belongs to the DPM2 family. As to quaternary structure, component of the dolichol-phosphate mannose (DPM) synthase complex composed of DPM1, DPM2 and DPM3; in the complex interacts directly with DPM3. Component of the glycosylphosphatidylinositol-N-acetylglucosaminyltransferase (GPI-GnT) complex composed at least by PIGA, PIGC, PIGH, PIGP, PIGQ, PIGY and DPM2. Interacts with PIGA, PIGC and PIGQ.

Its subcellular location is the endoplasmic reticulum membrane. It functions in the pathway protein modification; protein glycosylation. In terms of biological role, regulates the biosynthesis of dolichol phosphate-mannose. Regulatory subunit of the dolichol-phosphate mannose (DPM) synthase complex; essential for the ER localization and stable expression of DPM1. Part of the glycosylphosphatidylinositol-N-acetylglucosaminyltransferase (GPI-GnT) complex that catalyzes the transfer of N-acetylglucosamine from UDP-N-acetylglucosamine to phosphatidylinositol and participates in the first step of GPI biosynthesis. May act by regulating the GPI-GNT complex. The protein is Dolichol phosphate-mannose biosynthesis regulatory protein of Bos taurus (Bovine).